Reading from the N-terminus, the 485-residue chain is Otoconin-90 (485 aa).

The first 17 residues, 1-17, serve as a signal peptide directing secretion; that stretch reads MIMLLMVGMLMAPCVGA. Asn-37 carries N-linked (GlcNAc...) asparagine glycosylation. A phospholipase A2-like 1 region spans residues 75–189; it reads LLQFVNSMRC…SLNFLDASFC (115 aa). Disulfide bonds link Cys-84–Cys-144, Cys-98–Cys-189, Cys-100–Cys-116, Cys-115–Cys-171, Cys-122–Cys-164, Cys-131–Cys-157, and Cys-151–Cys-162. N-linked (GlcNAc...) asparagine glycosylation is found at Asn-178 and Asn-288. Phospholipase A2-like stretches follow at residues 315-371 and 383-435; these read MLQL…QVGC and CEDH…PVSC. Asn-417 carries an N-linked (GlcNAc...) asparagine glycan. Residues 444–485 are disordered; sequence LASSVDSSSEENSEEAPPQMERLRRFLEKPPGPLGARPLGGK.

It belongs to the phospholipase A2 family. In terms of assembly, interacts with OTOL1. In the embryo, highly expressed in the developing otocyst with weak expression in the brain. Also expressed in nonsensory epithelia of both the vestibular and cochlear portions of the developing inner ear. Not expressed in adult or embryonic macular sensory epithelia.

It localises to the secreted. Its function is as follows. Major protein of the otoconia, a calcium carbonate structure in the saccule and utricle of the ear. Together with OTOL1, acts as a scaffold for otoconia biomineralization: sequesters calcium and forms interconnecting fibrils between otoconia that are incorporated into the calcium crystal structure. Together with OTOL1, modulates calcite crystal morphology and growth kinetics. It is unlikely that this protein has phospholipase A2 activity. The sequence is that of Otoconin-90 from Mus musculus (Mouse).